Consider the following 319-residue polypeptide: Transmembrane protein 121 (319 aa).

7 helical membrane passes run 10 to 30 (HVCL…AYLV), 43 to 63 (IIVL…AVWV), 74 to 94 (YAMI…YFIF), 112 to 132 (ALTL…VALD), 150 to 170 (LFWV…LWEP), 174 to 194 (GLPL…LLVL), and 214 to 234 (MMLY…LARA). Residues 277–306 (PALSLELQPPPPQRNSVPPPPPPLHGPPGR) show a composition bias toward pro residues. The interval 277–319 (PALSLELQPPPPQRNSVPPPPPPLHGPPGRPHMSSPTRDPLDT) is disordered.

It belongs to the TMEM121 family. Highly expressed in heart and detected in pancreas, liver and skeletal muscle.

It localises to the membrane. In terms of biological role, may play a role in MAPK signaling. This chain is Transmembrane protein 121 (TMEM121), found in Homo sapiens (Human).